The sequence spans 149 residues: Protein FAM72B (149 aa).

This sequence belongs to the FAM72 family.

The chain is Protein FAM72B (FAM72B) from Homo sapiens (Human).